A 939-amino-acid chain; its full sequence is UvrABC system protein A (939 aa).

32–39 is an ATP binding site; that stretch reads GLSGSGKS. Residues 252–279 form a C4-type zinc finger; the sequence is CPDCGISIGEISPSMFSFNAPFGKCDVC. ABC transporter domains follow at residues 309–588 and 608–936; these read WGEG…KESI and AGKN…QYLK. 640 to 647 serves as a coordination point for ATP; that stretch reads GVSGSGKS. A C4-type zinc finger spans residues 739-765; it reads CEACKGDGIVRIEMQFLSDVYVPCDVC.

The protein belongs to the ABC transporter superfamily. UvrA family. Forms a heterotetramer with UvrB during the search for lesions.

The protein resides in the cytoplasm. In terms of biological role, the UvrABC repair system catalyzes the recognition and processing of DNA lesions. UvrA is an ATPase and a DNA-binding protein. A damage recognition complex composed of 2 UvrA and 2 UvrB subunits scans DNA for abnormalities. When the presence of a lesion has been verified by UvrB, the UvrA molecules dissociate. The polypeptide is UvrABC system protein A (Clostridium acetobutylicum (strain ATCC 824 / DSM 792 / JCM 1419 / IAM 19013 / LMG 5710 / NBRC 13948 / NRRL B-527 / VKM B-1787 / 2291 / W)).